Here is a 156-residue protein sequence, read N- to C-terminus: Small ribosomal subunit protein uS7 (156 aa).

This sequence belongs to the universal ribosomal protein uS7 family. Part of the 30S ribosomal subunit. Contacts proteins S9 and S11.

In terms of biological role, one of the primary rRNA binding proteins, it binds directly to 16S rRNA where it nucleates assembly of the head domain of the 30S subunit. Is located at the subunit interface close to the decoding center, probably blocks exit of the E-site tRNA. This is Small ribosomal subunit protein uS7 from Pseudomonas syringae pv. syringae (strain B728a).